The chain runs to 328 residues: NADH-quinone oxidoreductase subunit H 1 (328 aa).

8 helical membrane-spanning segments follow: residues 11-31 (VVKAVVLALCVTLAVAVFLLF), 81-101 (LAPVIAFFCALGVWVVIPWAP), 116-136 (VLVILAIAAMGVYGTALGGWA), 154-174 (ISYELAMAMSLLGVILMTGSV), 189-209 (LFPQFLGFLVFYIASLAEAGW), 235-257 (GLFFLTELTHAVNSAVLSTTFFL), 269-289 (IPGFVWFLLKVILMVFVLYWI), and 308-328 (VLLPVAALNLVGTAIYVALWA).

This sequence belongs to the complex I subunit 1 family. In terms of assembly, NDH-1 is composed of 14 different subunits. Subunits NuoA, H, J, K, L, M, N constitute the membrane sector of the complex.

It is found in the cell membrane. It carries out the reaction a quinone + NADH + 5 H(+)(in) = a quinol + NAD(+) + 4 H(+)(out). Its function is as follows. NDH-1 shuttles electrons from NADH, via FMN and iron-sulfur (Fe-S) centers, to quinones in the respiratory chain. The immediate electron acceptor for the enzyme in this species is believed to be ubiquinone. Couples the redox reaction to proton translocation (for every two electrons transferred, four hydrogen ions are translocated across the cytoplasmic membrane), and thus conserves the redox energy in a proton gradient. This subunit may bind ubiquinone. In Symbiobacterium thermophilum (strain DSM 24528 / JCM 14929 / IAM 14863 / T), this protein is NADH-quinone oxidoreductase subunit H 1.